Here is a 260-residue protein sequence, read N- to C-terminus: MVSLDDILGIVYVTSWSISMYPPIITNWRHKSASAISMDFVMLNTAGYSYLVISIFLQLYCWKMTGDESDLGRPKLTQFDFWYCLHGCLMNVVLLTQVVAGARIWRFPGKGHRKMNPWYLRILLASLAIFSLLTVQFMYSNYWYDWHNSRTLAYCNNLFLLKISMSLIKYIPQVTHNSTRKSMDCFPIQGVFLDVTGGIASLLQLIWQLSNDQGFSLDTFVTNFGKVGLSMVTLIFNFIFIMQWFVYRSRGHDLASEYPL.

Residues 1–67 (MVSLDDILGI…QLYCWKMTGD (67 aa)) enclose the PQ-loop 1 domain. Transmembrane regions (helical) follow at residues 7–28 (ILGIVYVTSWSISMYPPIITNW), 40–62 (FVMLNTAGYSYLVISIFLQLYCW), 81–102 (FWYCLHGCLMNVVLLTQVVAGA), 118–138 (WYLRILLASLAIFSLLTVQFM), and 151–175 (TLAYCNNLFLLKISMSLIKYIPQVT). The PQ-loop 2 domain maps to 162–212 (KISMSLIKYIPQVTHNSTRKSMDCFPIQGVFLDVTGGIASLLQLIWQLSND). The N-linked (GlcNAc...) asparagine glycan is linked to asparagine 177. The next 2 helical transmembrane spans lie at 185-205 (CFPIQGVFLDVTGGIASLLQL) and 227-247 (VGLSMVTLIFNFIFIMQWFVY).

It belongs to the cystinosin family.

The protein resides in the endosome membrane. The protein localises to the vacuole membrane. It carries out the reaction L-cystine(out) + H(+)(out) = L-cystine(in) + H(+)(in). Functionally, cystine/H(+) symporter that mediates export of cystine, the oxidized dimer of cysteine, from vacuoles/endodomes. The polypeptide is Cystine transporter (ERS1) (Saccharomyces cerevisiae (strain ATCC 204508 / S288c) (Baker's yeast)).